The chain runs to 332 residues: Ferredoxin--NADP reductase 1 (332 aa).

The FAD site is built by Asp35, Lys43, Phe48, Val88, Phe123, Asp284, and Thr325.

Belongs to the ferredoxin--NADP reductase type 2 family. In terms of assembly, homodimer. Requires FAD as cofactor.

It carries out the reaction 2 reduced [2Fe-2S]-[ferredoxin] + NADP(+) + H(+) = 2 oxidized [2Fe-2S]-[ferredoxin] + NADPH. This Listeria monocytogenes serotype 4b (strain F2365) protein is Ferredoxin--NADP reductase 1.